The primary structure comprises 786 residues: MGVRGLQGFVGSTCPHICTIVNIHELAERHRNKYPGCTPTIVVDAMCCLRYWYTAESWVCGGQWREYYCALRNFVAAFTSAGIKLIFFFDGMVEPGKRDEWVKRRLKNNREISKIFHYIKSKRDQPGRNMFFIPSGLAIFTRFALKTLGQETFCSLQEADYEVASYGLQHNCLGILGEDTDYLIYDTCPYFSIGDLCLESLQTIMLCREKLCESLGLRVADLPLLACLLGNDITPESMFESFRYKCLSSYASVKENAGKKGNIILAVSDYISKVLHLYQGEKKIEEMLPLGPNKALFYKGVTSYLLPGQKSPWLVQKPKGMITDKQQMVSLNPESKQEVPMCIDPEFKQEVPVCTNPESMQEVPMCMDPEPNQEASMCTDPESKQEVPMCTDSESKPEVSQYTNPESKQKLPSGIDTEFNLEALMCTHPEFKQEDVMDMEPEIKQVTMVSESEILKVARMHHVHSESYLVYNILSSGEIECSNTLEDELDQALPSQAFIYRPVRQRVYALLLGDWKDGASTGPVVKEWFVYPGNSLKHPDLVRPLQMTVQGGTPSLEVLWLSQEPAVQAQRLDTLLACFNLSSSREELQAVESPLRALCCLLIYLFVQVDTLSLEDLHAFIAQALCLQGKSTSQLMHLQLDYINSRAVQLGSLLVRGLTTLVLVNSACGFPWTTSEFMPWNVFDGKLFHQKYLQSEKGYAVEVLLEQNRSWLTKFHNLKAVVCKACSKENRRIVGRTHWDSPYTGRQGRQGYSSYRTDSTHGHSGQSWRNQGSGGRQHERNHWRRY.

The tract at residues 1–561 (MGVRGLQGFV…GTPSLEVLWL (561 aa)) is mediates transactivation of PPARG. Disordered stretches follow at residues 371-413 (PNQE…KLPS) and 738-786 (HWDS…WRRY). Over residues 750 to 771 (QGYSSYRTDSTHGHSGQSWRNQ) the composition is skewed to polar residues.

This sequence belongs to the constitutive coactivator of PPAR-gamma family. As to quaternary structure, interacts with ESR1 and RXRA. Interacts with PPARG; in a ligand-independent manner. As to expression, ubiquitously expressed (at protein level).

The protein localises to the nucleus. Functionally, functions as a transactivator of PPARG and ESR1. Functions in adipogenesis through PPARG activation. In Mus musculus (Mouse), this protein is Constitutive coactivator of peroxisome proliferator-activated receptor gamma (Fam120b).